The primary structure comprises 240 residues: Putative tyrosine phosphatase 067L (240 aa).

The Tyrosine-protein phosphatase domain occupies 3-151; that stretch reads QASFFVADKA…EREWPLNPTQ (149 aa). Cys96 serves as the catalytic Phosphocysteine intermediate.

Belongs to the protein-tyrosine phosphatase family.

The catalysed reaction is O-phospho-L-tyrosyl-[protein] + H2O = L-tyrosyl-[protein] + phosphate. In Aedes vexans (Inland floodwater mosquito), this protein is Putative tyrosine phosphatase 067L.